The following is a 242-amino-acid chain: Ubiquinone biosynthesis O-methyltransferase (242 aa).

Positions 44, 64, 85, and 129 each coordinate S-adenosyl-L-methionine.

This sequence belongs to the methyltransferase superfamily. UbiG/COQ3 family.

The catalysed reaction is a 3-demethylubiquinol + S-adenosyl-L-methionine = a ubiquinol + S-adenosyl-L-homocysteine + H(+). It carries out the reaction a 3-(all-trans-polyprenyl)benzene-1,2-diol + S-adenosyl-L-methionine = a 2-methoxy-6-(all-trans-polyprenyl)phenol + S-adenosyl-L-homocysteine + H(+). The protein operates within cofactor biosynthesis; ubiquinone biosynthesis. Functionally, O-methyltransferase that catalyzes the 2 O-methylation steps in the ubiquinone biosynthetic pathway. The sequence is that of Ubiquinone biosynthesis O-methyltransferase from Citrobacter koseri (strain ATCC BAA-895 / CDC 4225-83 / SGSC4696).